Consider the following 303-residue polypeptide: Cysteine synthase B (303 aa).

Lysine 41 carries the post-translational modification N6-(pyridoxal phosphate)lysine. Residues asparagine 71, 174 to 178, and serine 255 contribute to the pyridoxal 5'-phosphate site; that span reads GTTGT.

This sequence belongs to the cysteine synthase/cystathionine beta-synthase family. In terms of assembly, homodimer. Requires pyridoxal 5'-phosphate as cofactor.

The catalysed reaction is O-acetyl-L-serine + hydrogen sulfide = L-cysteine + acetate. Its pathway is amino-acid biosynthesis; L-cysteine biosynthesis; L-cysteine from L-serine: step 2/2. Two cysteine synthase enzymes are found. Both catalyze the same reaction. Cysteine synthase B can also use thiosulfate in place of sulfide to give cysteine thiosulfonate as a product. The sequence is that of Cysteine synthase B (cysM) from Escherichia coli (strain K12).